A 344-amino-acid chain; its full sequence is tRNA dimethylallyltransferase (344 aa).

19-26 (GPTASGKT) contributes to the ATP binding site. Substrate is bound at residue 21–26 (TASGKT).

The protein belongs to the IPP transferase family. Monomer. Mg(2+) is required as a cofactor.

It carries out the reaction adenosine(37) in tRNA + dimethylallyl diphosphate = N(6)-dimethylallyladenosine(37) in tRNA + diphosphate. Its function is as follows. Catalyzes the transfer of a dimethylallyl group onto the adenine at position 37 in tRNAs that read codons beginning with uridine, leading to the formation of N6-(dimethylallyl)adenosine (i(6)A). The polypeptide is tRNA dimethylallyltransferase (Bifidobacterium animalis subsp. lactis (strain AD011)).